The following is a 337-amino-acid chain: Pyruvate dehydrogenase E1 component subunit beta (337 aa).

Glutamate 73 contacts thiamine diphosphate.

As to quaternary structure, heterodimer of an alpha and a beta chain. The cofactor is thiamine diphosphate.

The enzyme catalyses N(6)-[(R)-lipoyl]-L-lysyl-[protein] + pyruvate + H(+) = N(6)-[(R)-S(8)-acetyldihydrolipoyl]-L-lysyl-[protein] + CO2. Its function is as follows. The pyruvate dehydrogenase complex catalyzes the overall conversion of pyruvate to acetyl-CoA and CO(2). It contains multiple copies of three enzymatic components: pyruvate dehydrogenase (E1), dihydrolipoamide acetyltransferase (E2) and lipoamide dehydrogenase (E3). The polypeptide is Pyruvate dehydrogenase E1 component subunit beta (pdhB) (Leifsonia xyli subsp. xyli (strain CTCB07)).